We begin with the raw amino-acid sequence, 425 residues long: Serine--tRNA ligase (425 aa).

231 to 233 lines the L-serine pocket; it reads TAE. 262–264 provides a ligand contact to ATP; it reads RSE. L-serine is bound at residue Glu-285. An ATP-binding site is contributed by 349–352; sequence EISS. Ser-385 lines the L-serine pocket.

The protein belongs to the class-II aminoacyl-tRNA synthetase family. Type-1 seryl-tRNA synthetase subfamily. In terms of assembly, homodimer. The tRNA molecule binds across the dimer.

It is found in the cytoplasm. The catalysed reaction is tRNA(Ser) + L-serine + ATP = L-seryl-tRNA(Ser) + AMP + diphosphate + H(+). The enzyme catalyses tRNA(Sec) + L-serine + ATP = L-seryl-tRNA(Sec) + AMP + diphosphate + H(+). Its pathway is aminoacyl-tRNA biosynthesis; selenocysteinyl-tRNA(Sec) biosynthesis; L-seryl-tRNA(Sec) from L-serine and tRNA(Sec): step 1/1. Its function is as follows. Catalyzes the attachment of serine to tRNA(Ser). Is also able to aminoacylate tRNA(Sec) with serine, to form the misacylated tRNA L-seryl-tRNA(Sec), which will be further converted into selenocysteinyl-tRNA(Sec). The sequence is that of Serine--tRNA ligase from Halalkalibacterium halodurans (strain ATCC BAA-125 / DSM 18197 / FERM 7344 / JCM 9153 / C-125) (Bacillus halodurans).